A 115-amino-acid chain; its full sequence is UPF0738 protein SACOL1009 (115 aa).

This sequence belongs to the UPF0738 family.

In Staphylococcus aureus (strain COL), this protein is UPF0738 protein SACOL1009.